We begin with the raw amino-acid sequence, 493 residues long: Lysine--tRNA ligase (493 aa).

2 residues coordinate Mg(2+): Glu-406 and Glu-413.

The protein belongs to the class-II aminoacyl-tRNA synthetase family. Homodimer. Mg(2+) is required as a cofactor.

The protein localises to the cytoplasm. The catalysed reaction is tRNA(Lys) + L-lysine + ATP = L-lysyl-tRNA(Lys) + AMP + diphosphate. The protein is Lysine--tRNA ligase of Leuconostoc citreum (strain KM20).